A 389-amino-acid chain; its full sequence is MNFHEYQSKQLLAEYGIPVPAGKVASTPDEAVEVANSLGKGPWMVKAQIHAGGRGKAGGVKFCKTTDDVKAAADKMLGTKMSTYQTAGVELPVNLVLVTTAGEIVKELYLSILVDRGTKTITYIASSEGGVEIEQVAAETPELIHSLNVDFVEGVQGYHGRDFGFKLGLNAKQAGQFASIMVNLYRLFNDKDLALVEINPLAILDDGNLYALDGKFDSDDNAAFRQKALVAMRDKTQEDETEVTASELDINYVTMDGNIGCMVNGAGLAMATMDVIKLNGGEPANFLDVGGGANKQRVIEAFKLILSSDKVEGIFVNIFGGIVRCDMIAEGIIAAVKEVGVKVPVVVRLEGTNVEEGKQLLRDSGMAIIPADNINDGAKKVVEAVKNAA.

The ATP-grasp domain maps to 9 to 244 (KQLLAEYGIP…KTQEDETEVT (236 aa)). Residues Lys-46, 53-55 (GRG), Gly-102, and Glu-107 each bind ATP. Positions 199 and 213 each coordinate Mg(2+). Residues Asn-264 and 321–323 (GIV) contribute to the substrate site.

It belongs to the succinate/malate CoA ligase beta subunit family. Heterotetramer of two alpha and two beta subunits. The cofactor is Mg(2+).

The catalysed reaction is succinate + ATP + CoA = succinyl-CoA + ADP + phosphate. It carries out the reaction GTP + succinate + CoA = succinyl-CoA + GDP + phosphate. It participates in carbohydrate metabolism; tricarboxylic acid cycle; succinate from succinyl-CoA (ligase route): step 1/1. Functionally, succinyl-CoA synthetase functions in the citric acid cycle (TCA), coupling the hydrolysis of succinyl-CoA to the synthesis of either ATP or GTP and thus represents the only step of substrate-level phosphorylation in the TCA. The beta subunit provides nucleotide specificity of the enzyme and binds the substrate succinate, while the binding sites for coenzyme A and phosphate are found in the alpha subunit. In Xanthomonas campestris pv. campestris (strain 8004), this protein is Succinate--CoA ligase [ADP-forming] subunit beta.